We begin with the raw amino-acid sequence, 374 residues long: tRNA-specific 2-thiouridylase MnmA (374 aa).

Residues 10-17 (AMSGGVDS) and leucine 36 contribute to the ATP site. The active-site Nucleophile is cysteine 111. Cysteine 111 and cysteine 209 are oxidised to a cystine. Glycine 135 is an ATP binding site. Positions 159–161 (KDQ) are interaction with tRNA. Catalysis depends on cysteine 209, which acts as the Cysteine persulfide intermediate.

The protein belongs to the MnmA/TRMU family.

It localises to the cytoplasm. The enzyme catalyses S-sulfanyl-L-cysteinyl-[protein] + uridine(34) in tRNA + AH2 + ATP = 2-thiouridine(34) in tRNA + L-cysteinyl-[protein] + A + AMP + diphosphate + H(+). In terms of biological role, catalyzes the 2-thiolation of uridine at the wobble position (U34) of tRNA, leading to the formation of s(2)U34. The protein is tRNA-specific 2-thiouridylase MnmA of Acidobacterium capsulatum (strain ATCC 51196 / DSM 11244 / BCRC 80197 / JCM 7670 / NBRC 15755 / NCIMB 13165 / 161).